The primary structure comprises 360 residues: MTEKTPRKPASFTVSQASNRPEAADEAPRRPRAVRDLDVVVAQPDVFALSEEEAAELEILDPSFEAPERKGWSLSRILFGALGILVSFAIGIWTEDLIRALFSRADWLGWTALGVAIIALAAFIAIVVRELVALRRLASVQHLRKDAADAAERDDMAAARKAVDALRSIAAGLPETARGRQLLDGLTDDIIDGRNLIQLAETEILRPLDREARTLILNASKRVSIVTAISPRALVDIGYVIFESARLIRRLSQLYGGRPGTLGFLKLARRVIAHLAVTGTLAMGDSVIQQLVGHGLASRLSAKLGEGVVNGLMTARIGIAAMDVVRPFPFNAEKRPGIGDFIGDLVKINGERPDKKHPGK.

Positions 1-30 (MTEKTPRKPASFTVSQASNRPEAADEAPRR) are disordered. A run of 2 helical transmembrane segments spans residues 77–97 (ILFG…TEDL) and 108–128 (LGWT…AIVV).

It belongs to the UPF0283 family.

It is found in the cell inner membrane. The polypeptide is UPF0283 membrane protein Oant_2119 (Brucella anthropi (strain ATCC 49188 / DSM 6882 / CCUG 24695 / JCM 21032 / LMG 3331 / NBRC 15819 / NCTC 12168 / Alc 37) (Ochrobactrum anthropi)).